We begin with the raw amino-acid sequence, 618 residues long: UvrABC system protein C (618 aa).

The GIY-YIG domain maps to 13–92 (DKPGVYLMKN…IKKYRPKYNI (80 aa)). The 36-residue stretch at 204-239 (LDIVENFKLNMEKAAENLEFEKAAMLRDKINIIEKI) folds into the UVR domain.

The protein belongs to the UvrC family. As to quaternary structure, interacts with UvrB in an incision complex.

The protein localises to the cytoplasm. Its function is as follows. The UvrABC repair system catalyzes the recognition and processing of DNA lesions. UvrC both incises the 5' and 3' sides of the lesion. The N-terminal half is responsible for the 3' incision and the C-terminal half is responsible for the 5' incision. This is UvrABC system protein C from Clostridium botulinum (strain Loch Maree / Type A3).